A 479-amino-acid chain; its full sequence is MAKTRGSCCLVNALIAIAFLATAHLCEAGLSQKEQDKVSKLPGQNFNVSFAHYSGFVATNEQLGRALFYWLFEAVEDAKSKPLVLWLNGGPGCSSVAYGEAEEIGPFHIKADGKTLYLNQYSWNQAANILFLDAPVGVGYSYSNTSSDLKSNGDKRTAEDSLKFLLKWVERFPEYKGRDFYIVGESYAGHYIPQLSEAIVKHNQGSDKNSINLKGYMVGNGLMDDFHDRLGLFQYIWSLGFISDQTYSLLQLQCGFESFIHSSKQCNKILEIADKEIGNIDQYSVFTPACVANASQSNMLLKKRPMTSRVSEQYDPCTEKHTTVYFNLPEVQKALHVPPGLAPSKWDTCSDVVSEHWNDSPSSVLNIYHELIAAGLRIWVFSGDADAVVPVTSTRYSIDALNLRPLSAYGPWYLDGQVGGWSQQYAGLNFVTVRGAGHEVPLHRPKQALALFKAFISGTPLSTHENSISRDMSELVSDS.

A signal peptide spans 1-28 (MAKTRGSCCLVNALIAIAFLATAHLCEA). Residues asparagine 47 and asparagine 144 are each glycosylated (N-linked (GlcNAc...) asparagine). 3 cysteine pairs are disulfide-bonded: cysteine 93–cysteine 349, cysteine 254–cysteine 266, and cysteine 290–cysteine 317. Serine 186 is an active-site residue. Asparagine 293 carries an N-linked (GlcNAc...) asparagine glycan. Catalysis depends on residues aspartate 386 and histidine 438.

It belongs to the peptidase S10 family. In terms of tissue distribution, expressed in seedlings, roots, leaves and flowers.

It localises to the secreted. Probable carboxypeptidase. This chain is Serine carboxypeptidase-like 29 (SCPL29), found in Arabidopsis thaliana (Mouse-ear cress).